The sequence spans 137 residues: Large-conductance mechanosensitive channel (137 aa).

Helical transmembrane passes span 10–30 (FAMR…AAFG) and 76–96 (GVFI…FVAI).

Belongs to the MscL family. In terms of assembly, homopentamer.

The protein resides in the cell inner membrane. Its function is as follows. Channel that opens in response to stretch forces in the membrane lipid bilayer. May participate in the regulation of osmotic pressure changes within the cell. The protein is Large-conductance mechanosensitive channel of Salmonella typhimurium (strain LT2 / SGSC1412 / ATCC 700720).